Here is a 360-residue protein sequence, read N- to C-terminus: Mannonate dehydratase (360 aa).

This sequence belongs to the mannonate dehydratase family. The cofactor is Fe(2+). Requires Mn(2+) as cofactor.

The enzyme catalyses D-mannonate = 2-dehydro-3-deoxy-D-gluconate + H2O. Its pathway is carbohydrate metabolism; pentose and glucuronate interconversion. In terms of biological role, catalyzes the dehydration of D-mannonate. The sequence is that of Mannonate dehydratase from Thermotoga sp. (strain RQ2).